Reading from the N-terminus, the 211-residue chain is uncharacterized protein (211 aa).

6 helical membrane passes run 21–38, 53–75, 82–104, 124–146, 159–178, and 188–210; these read WYVITLLLVVIYIYASEI, WGMDWFNEIWNALVFHFTNYAAV, TAYLILIGLNIEISMMFAIMGVA, IFYAIVLSAACVVVEIILNAANV, PLLIFLIGYLPFFLVAYWVY, and AVSFGILAIDAVLLIVFAGLMEW.

It is found in the cell membrane. This is an uncharacterized protein from Archaeoglobus fulgidus (strain ATCC 49558 / DSM 4304 / JCM 9628 / NBRC 100126 / VC-16).